The chain runs to 78 residues: Large ribosomal subunit protein bL28 (78 aa).

Positions 1 to 21 (MSRVCQVTGKKPMVGNNRSHA) are disordered.

It belongs to the bacterial ribosomal protein bL28 family.

This Shewanella baltica (strain OS223) protein is Large ribosomal subunit protein bL28.